A 162-amino-acid chain; its full sequence is Crossover junction endodeoxyribonuclease RuvC (162 aa).

Active-site residues include aspartate 7, glutamate 67, and aspartate 140. Mg(2+) is bound by residues aspartate 7, glutamate 67, and aspartate 140.

The protein belongs to the RuvC family. As to quaternary structure, homodimer which binds Holliday junction (HJ) DNA. The HJ becomes 2-fold symmetrical on binding to RuvC with unstacked arms; it has a different conformation from HJ DNA in complex with RuvA. In the full resolvosome a probable DNA-RuvA(4)-RuvB(12)-RuvC(2) complex forms which resolves the HJ. Mg(2+) serves as cofactor.

It is found in the cytoplasm. It carries out the reaction Endonucleolytic cleavage at a junction such as a reciprocal single-stranded crossover between two homologous DNA duplexes (Holliday junction).. In terms of biological role, the RuvA-RuvB-RuvC complex processes Holliday junction (HJ) DNA during genetic recombination and DNA repair. Endonuclease that resolves HJ intermediates. Cleaves cruciform DNA by making single-stranded nicks across the HJ at symmetrical positions within the homologous arms, yielding a 5'-phosphate and a 3'-hydroxyl group; requires a central core of homology in the junction. The consensus cleavage sequence is 5'-(A/T)TT(C/G)-3'. Cleavage occurs on the 3'-side of the TT dinucleotide at the point of strand exchange. HJ branch migration catalyzed by RuvA-RuvB allows RuvC to scan DNA until it finds its consensus sequence, where it cleaves and resolves the cruciform DNA. The chain is Crossover junction endodeoxyribonuclease RuvC from Heliobacterium modesticaldum (strain ATCC 51547 / Ice1).